The sequence spans 162 residues: UPF0305 protein MmarC5_0909 (162 aa).

It belongs to the UPF0305 family.

The sequence is that of UPF0305 protein MmarC5_0909 from Methanococcus maripaludis (strain C5 / ATCC BAA-1333).